The chain runs to 101 residues: Small ribosomal subunit protein uS14 (101 aa).

Belongs to the universal ribosomal protein uS14 family. Part of the 30S ribosomal subunit. Contacts proteins S3 and S10.

In terms of biological role, binds 16S rRNA, required for the assembly of 30S particles and may also be responsible for determining the conformation of the 16S rRNA at the A site. The protein is Small ribosomal subunit protein uS14 of Actinobacillus pleuropneumoniae serotype 3 (strain JL03).